A 32-amino-acid chain; its full sequence is Acyclotide phyb-M (32 aa).

Q1 carries the pyrrolidone carboxylic acid modification. Intrachain disulfides connect C5–C21, C9–C23, and C14–C28.

Post-translationally, contains 3 disulfide bonds. Expressed in midvein, lamina and periphery of leaves (at protein level).

Functionally, probably participates in a plant defense mechanism. The sequence is that of Acyclotide phyb-M from Petunia hybrida (Petunia).